Consider the following 265-residue polypeptide: MKLGVNIDHIAVLREARKINDPDPIEALPIVKRAGADQITIHLREDRRHINDFDAKRIIEYSSLPVNMECSIDPDIIDIVAQLKPHRATLVPEKREEVTTEGGLDVIGQYERISDAIEKLKANEIDVSLFIDPDIEIIAACADTGADMVELHTGEYANIYAMLYSNLSKTPHSIKSLELSRKELQEKLSIAIGDLENAAIYAAKSGLLVAAGHGLNYQNVGTIAAMANIIELNIGQSIIARSIWDGLFEAVRKMKEIIDEAGHCH.

Asn-6 lines the 3-amino-2-oxopropyl phosphate pocket. 8-9 (DH) provides a ligand contact to 1-deoxy-D-xylulose 5-phosphate. Position 17 (Arg-17) interacts with 3-amino-2-oxopropyl phosphate. Catalysis depends on His-42, which acts as the Proton acceptor. Residues Arg-44 and His-49 each coordinate 1-deoxy-D-xylulose 5-phosphate. Catalysis depends on Glu-69, which acts as the Proton acceptor. A 1-deoxy-D-xylulose 5-phosphate-binding site is contributed by Thr-99. The active-site Proton donor is His-213. 3-amino-2-oxopropyl phosphate contacts are provided by residues Gly-214 and 235–236 (GQ).

Belongs to the PNP synthase family. In terms of assembly, homooctamer; tetramer of dimers.

The protein localises to the cytoplasm. The enzyme catalyses 3-amino-2-oxopropyl phosphate + 1-deoxy-D-xylulose 5-phosphate = pyridoxine 5'-phosphate + phosphate + 2 H2O + H(+). It functions in the pathway cofactor biosynthesis; pyridoxine 5'-phosphate biosynthesis; pyridoxine 5'-phosphate from D-erythrose 4-phosphate: step 5/5. Catalyzes the complicated ring closure reaction between the two acyclic compounds 1-deoxy-D-xylulose-5-phosphate (DXP) and 3-amino-2-oxopropyl phosphate (1-amino-acetone-3-phosphate or AAP) to form pyridoxine 5'-phosphate (PNP) and inorganic phosphate. The polypeptide is Pyridoxine 5'-phosphate synthase (Nitratiruptor sp. (strain SB155-2)).